A 268-amino-acid polypeptide reads, in one-letter code: Tetratricopeptide repeat protein 33 (268 aa).

The segment at 14–34 (VSKQTVQQFEQDSEQADEDEV) is disordered. Over residues 24 to 34 (QDSEQADEDEV) the composition is skewed to acidic residues. 3 TPR repeats span residues 60–93 (SKRL…TPED), 94–127 (AVLY…RPIW), and 128–161 (WEAW…HPSE). Residues 249 to 268 (EGDDNPTSSSQSVLIKARGL) are disordered.

The chain is Tetratricopeptide repeat protein 33 (ttc33) from Danio rerio (Zebrafish).